Here is a 207-residue protein sequence, read N- to C-terminus: Methylated-DNA--protein-cysteine methyltransferase (207 aa).

Cys5 contributes to the Zn(2+) binding site. At Ser14 the chain carries Phosphoserine. The Zn(2+) site is built by Cys24, His29, and His85. The DNA site is built by Thr95, Tyr114, Gln115, Asn123, and Arg128. Catalysis depends on Cys145, which acts as the Nucleophile; methyl group acceptor. Ser151 provides a ligand contact to DNA. A Phosphoserine modification is found at Ser201.

This sequence belongs to the MGMT family. The cofactor is Zn(2+).

It is found in the nucleus. The catalysed reaction is a 6-O-methyl-2'-deoxyguanosine in DNA + L-cysteinyl-[protein] = S-methyl-L-cysteinyl-[protein] + a 2'-deoxyguanosine in DNA. The enzyme catalyses a 4-O-methyl-thymidine in DNA + L-cysteinyl-[protein] = a thymidine in DNA + S-methyl-L-cysteinyl-[protein]. Involved in the cellular defense against the biological effects of O6-methylguanine (O6-MeG) and O4-methylthymine (O4-MeT) in DNA. Repairs the methylated nucleobase in DNA by stoichiometrically transferring the methyl group to a cysteine residue in the enzyme. This is a suicide reaction: the enzyme is irreversibly inactivated. In Homo sapiens (Human), this protein is Methylated-DNA--protein-cysteine methyltransferase (MGMT).